A 136-amino-acid polypeptide reads, in one-letter code: Flagellar assembly factor FliW 2 (136 aa).

The protein belongs to the FliW family. Interacts with translational regulator CsrA and flagellin(s).

The protein localises to the cytoplasm. Acts as an anti-CsrA protein, binds CsrA and prevents it from repressing translation of its target genes, one of which is flagellin. Binds to flagellin and participates in the assembly of the flagellum. The protein is Flagellar assembly factor FliW 2 of Wolinella succinogenes (strain ATCC 29543 / DSM 1740 / CCUG 13145 / JCM 31913 / LMG 7466 / NCTC 11488 / FDC 602W) (Vibrio succinogenes).